The chain runs to 74 residues: High-potential iron-sulfur protein (74 aa).

[4Fe-4S] cluster is bound by residues Cys-36, Cys-39, Cys-53, and Cys-67.

Belongs to the high-potential iron-sulfur protein (HiPIP) family. Homodimer.

Its function is as follows. Specific class of high-redox-potential 4Fe-4S ferredoxins. Functions in anaerobic electron transport in most purple and in some other photosynthetic bacteria and in at least one genus (Paracoccus) of halophilic, denitrifying bacteria. This Rubrivivax gelatinosus (Rhodocyclus gelatinosus) protein is High-potential iron-sulfur protein (hip).